We begin with the raw amino-acid sequence, 283 residues long: Prepilin leader peptidase/N-methyltransferase (283 aa).

Transmembrane regions (helical) follow at residues 13 to 33, 106 to 126, 128 to 148, 153 to 173, 176 to 196, 216 to 236, and 259 to 279; these read VWLL…NVVI, WRYP…GLLW, PGLA…LAAI, QLLP…FNLA, FVPL…LWLI, LLAA…VLIA, and LAFG…NVLG.

This sequence belongs to the peptidase A24 family.

It is found in the cell inner membrane. It catalyses the reaction Typically cleaves a -Gly-|-Phe- bond to release an N-terminal, basic peptide of 5-8 residues from type IV prepilin, and then N-methylates the new N-terminal amino group, the methyl donor being S-adenosyl-L-methionine.. Plays a role in type II pseudopili formation by proteolytically removing the leader sequence from substrate proteins and subsequently monomethylating the alpha-amino group of the newly exposed N-terminal phenylalanine. Substrates include proteins required for biogenesis of the type II general secretory apparatus. This chain is Prepilin leader peptidase/N-methyltransferase (outO), found in Dickeya chrysanthemi (Pectobacterium chrysanthemi).